Reading from the N-terminus, the 395-residue chain is Protein phosphatase methylesterase 1 (395 aa).

Active-site residues include Ser194, Asp222, and His348.

This sequence belongs to the AB hydrolase superfamily.

The enzyme catalyses [phosphatase 2A protein]-C-terminal L-leucine methyl ester + H2O = [phosphatase 2A protein]-C-terminal L-leucine + methanol + H(+). Functionally, demethylates proteins that have been reversibly carboxymethylated. Demethylates the phosphatase PP2A catalytic subunit. The sequence is that of Protein phosphatase methylesterase 1 (PPE1) from Kluyveromyces lactis (strain ATCC 8585 / CBS 2359 / DSM 70799 / NBRC 1267 / NRRL Y-1140 / WM37) (Yeast).